A 214-amino-acid chain; its full sequence is Orotate phosphoribosyltransferase (214 aa).

Position 26 (lysine 26) interacts with 5-phospho-alpha-D-ribose 1-diphosphate. Position 34–35 (34–35 (FF)) interacts with orotate. 5-phospho-alpha-D-ribose 1-diphosphate contacts are provided by residues 72 to 73 (YK), arginine 99, lysine 100, lysine 103, histidine 105, and 124 to 132 (DDVITAGTA). 2 residues coordinate orotate: threonine 128 and arginine 156.

Belongs to the purine/pyrimidine phosphoribosyltransferase family. PyrE subfamily. Homodimer. Mg(2+) serves as cofactor.

It catalyses the reaction orotidine 5'-phosphate + diphosphate = orotate + 5-phospho-alpha-D-ribose 1-diphosphate. It participates in pyrimidine metabolism; UMP biosynthesis via de novo pathway; UMP from orotate: step 1/2. Catalyzes the transfer of a ribosyl phosphate group from 5-phosphoribose 1-diphosphate to orotate, leading to the formation of orotidine monophosphate (OMP). This is Orotate phosphoribosyltransferase from Mannheimia succiniciproducens (strain KCTC 0769BP / MBEL55E).